A 2222-amino-acid chain; its full sequence is MALYNPIPVRQNCFTVNRSLFIFGEDNIVRKYAKKLIDWPPFEYMILATIIANCIVLALEQHLPEDDKTPMSRRLEKTEPYFIGIFCFEAGIKIVALGFIFHKGSYLRNGWNVMDFIVVLSGILATAGTHFNTHVDLRTLRAVRVLRPLKLVSGIPSLQIVLKSIMKAMVPLLQIGLLLFFAILMFAIIGLEFYSGKLHRACFMNNSGILEGFDPPHPCGVQGCPAGYECKDWIGPNDGITQFDNILFAVLTVFQCITMEGWTTVLYNTNDALGATWNWLYFIPLIIIGSFFVLNLVLGVLSGEFAKERERVENRRAFMKLRRQQQIERELNGYRAWIDKAEEVMLAEENKNSGTSALEVLRRATIKRSRTEAMTRDSSDEHCVDISSVGTPLARASIKSTKVDGASYFRHKERLLRISIRHMVKSQVFYWIVLSVVALNTACVAIVHHNQPQWLTHLLYYAEFLFLGLFLLEMSLKMYGMGPRLYFHSSFNCFDFGVTVGSIFEVVWAIFRPGTSFGISVLRALRLLRIFKITKYWASLRNLVVSLMSSMKSIISLLFLLFLFIVVFALLGMQLFGGRFNFNDGTPSANFDTFPAAIMTVFQILTGEDWNEVMYNGIRSQGGVSSGMWSAIYFIVLTLFGNYTLLNVFLAIAVDNLANAQELTKDEQEEEEAFNQKHALQKAKEVSPMSAPNMPSIERDRRRRHHMSMWEPRSSHLRERRRRHHMSVWEQRTSQLRRHMQMSSQEALNKEEAPPMNPLNPLNPLSPLNPLNAHPSLYRRPRPIEGLALGLGLEKCEEERISRGGSLKGDIGGLTSVLDNQRSPLSLGKREPPWLPRSCHGNCDPTQQETGGGETVVTFEDRARHRQSQRRSRHRRVRTEGKESASASRSRSASQERSLDEGVSIDGEKEHEPQSSHRSKEPTIHEEERTQDLRRTNSLMVPRGSGLVGALDEAETPLVQPQPELEVGKDAALTEQEAEGSSEQALLADVQLDVGRGISQSEPDLSCMTTNMDKATTESTSVTVAIPDVDPLVDSTVVNISNKTDGEASPLKEAETKEEEEEVEKKKQKKEKRETGKAMVPHSSMFIFSTTNPIRKACHYIVNLRYFEMCILLVIAASSIALAAEDPVLTNSERNKVLRYFDYVFTGVFTFEMVIKMIDQGLILQDGSYFRDLWNILDFVVVVGALVAFALANALGTNKGRDIKTIKSLRVLRVLRPLKTIKRLPKLKAVFDCVVTSLKNVFNILIVYKLFMFIFAVIAVQLFKGKFFYCTDSSKDTEKECIGNYVDHEKNKMEVKGREWKRHEFHYDNIIWALLTLFTVSTGEGWPQVLQHSVDVTEEDRGPSRSNRMEMSIFYVVYFVVFPFFFVNIFVALIIITFQEQGDKMMEECSLEKNERACIDFAISAKPLTRYMPQNRHTFQYRVWHFVVSPSFEYTIMAMIALNTVVLMMKYYSAPWTYELALKYLNIAFTMVFSLECVLKVIAFGFLNYFRDTWNIFDFITVIGSITEIILTDSKLVNTSGFNMSFLKLFRAARLIKLLRQGYTIRILLWTFVQSFKALPYVCLLIAMLFFIYAIIGMQVFGNIKLDEESHINRHNNFRSFFGSLMLLFRSATGEAWQEIMLSCLGEKGCEPDTTAPSGQNESERCGTDLAYVYFVSFIFFCSFLMLNLFVAVIMDNFEYLTRDSSILGPHHLDEFVRVWAEYDRAACGRIHYTEMYEMLTLMSPPLGLGKRCPSKVAYKRLVLMNMPVAEDMTVHFTSTLMALIRTALDIKIAKGGADRQQLDSELQKETLAIWPHLSQKMLDLLVPMPKASDLTVGKIYAAMMIMDYYKQSKVKKQRQQLEEQKNAPMFQRMEPSSLPQEIISNAKALPYLQQDPVSGLSGRSGYPSMSPLSPQEIFQLACMDPADDGQFQEQQSLVVTDPSSMRRSFSTIRDKRSNSSWLEEFSMERSSENTYKSRRRSYHSSLRLSAHRLNSDSGHKSDTHRSGGRERGRSKERKHLLSPDVSRCNSEERGTQADWESPERRQSRSPSEGRSQTPNRQGTGSLSESSIPSISDTSTPRRSRRQLPPVPPKPRPLLSYSSLMRHTGGISPPPDGSEGGSPLASQALESNSACLTESSNSLHPQQGQHPSPQHYISEPYLALHEDSHASDCGEEETLTFEAAVATSLGRSNTIGSAPPLRHSWQMPNGHYRRRRLGGLGLAMMCGAVSDLLSDTEEDDKC.

Over 1–40 (MALYNPIPVRQNCFTVNRSLFIFGEDNIVRKYAKKLIDWP) the chain is Cytoplasmic. Residues 27–305 (NIVRKYAKKL…LVLGVLSGEF (279 aa)) form an I repeat. Residues 41–59 (PFEYMILATIIANCIVLAL) form a helical membrane-spanning segment. The Extracellular segment spans residues 60 to 78 (EQHLPEDDKTPMSRRLEKT). Residues 79-97 (EPYFIGIFCFEAGIKIVAL) form a helical membrane-spanning segment. Residues 98–109 (GFIFHKGSYLRN) lie on the Cytoplasmic side of the membrane. Residues 110–124 (GWNVMDFIVVLSGIL) form a helical membrane-spanning segment. Residues 125–136 (ATAGTHFNTHVD) lie on the Extracellular side of the membrane. The helical transmembrane segment at 137-156 (LRTLRAVRVLRPLKLVSGIP) threads the bilayer. At 157-174 (SLQIVLKSIMKAMVPLLQ) the chain is on the cytoplasmic side. A helical transmembrane segment spans residues 175–195 (IGLLLFFAILMFAIIGLEFYS). Over 196–277 (GKLHRACFMN…NTNDALGATW (82 aa)) the chain is Extracellular. The N-linked (GlcNAc...) asparagine glycan is linked to Asn-205. Residues 278–301 (NWLYFIPLIIIGSFFVLNLVLGVL) form a helical membrane-spanning segment. Residues 302–427 (SGEFAKERER…ISIRHMVKSQ (126 aa)) lie on the Cytoplasmic side of the membrane. Residues 325–342 (QQIERELNGYRAWIDKAE) are binding to the beta subunit. Residue Asp-377 participates in Ca(2+) binding. Ser-378 carries the phosphoserine modification. The Ca(2+) site is built by Ser-379, Glu-381, and Cys-383. Thr-391 carries the phosphothreonine modification. The stretch at 413–657 (ERLLRISIRH…VFLAIAVDNL (245 aa)) is one II repeat. Residues 428–447 (VFYWIVLSVVALNTACVAIV) traverse the membrane as a helical segment. The Extracellular portion of the chain corresponds to 448 to 460 (HHNQPQWLTHLLY). The chain crosses the membrane as a helical span at residues 461-480 (YAEFLFLGLFLLEMSLKMYG). Residues 481–489 (MGPRLYFHS) lie on the Cytoplasmic side of the membrane. A helical membrane pass occupies residues 490–508 (SFNCFDFGVTVGSIFEVVW). Residues 509–518 (AIFRPGTSFG) lie on the Extracellular side of the membrane. Residues 519–537 (ISVLRALRLLRIFKITKYW) traverse the membrane as a helical segment. The Cytoplasmic segment spans residues 538–556 (ASLRNLVVSLMSSMKSIIS). Residues 557-576 (LLFLLFLFIVVFALLGMQLF) form a helical membrane-spanning segment. The Extracellular portion of the chain corresponds to 577-629 (GGRFNFNDGTPSANFDTFPAAIMTVFQILTGEDWNEVMYNGIRSQGGVSSGMW). A helical transmembrane segment spans residues 630-654 (SAIYFIVLTLFGNYTLLNVFLAIAV). The Cytoplasmic portion of the chain corresponds to 655–1100 (DNLANAQELT…TNPIRKACHY (446 aa)). The interval 680 to 727 (LQKAKEVSPMSAPNMPSIERDRRRRHHMSMWEPRSSHLRERRRRHHMS) is disordered. Phosphoserine occurs at positions 687, 696, 744, 766, and 806. 2 disordered regions span residues 820-944 (NQRS…VPRG) and 1042-1076 (NKTDGEASPLKEAETKEEEEEVEKKKQKKEKRETG). Residues 864-877 (RHRQSQRRSRHRRV) are compositionally biased toward basic residues. The span at 884 to 896 (SASASRSRSASQE) shows a compositional bias: low complexity. Ser-898 carries the phosphoserine modification. Composition is skewed to basic and acidic residues over residues 906-935 (DGEKEHEPQSSHRSKEPTIHEEERTQDLRR) and 1044-1055 (TDGEASPLKEAE). Ser-1049 carries the post-translational modification Phosphoserine. The stretch at 1092–1378 (NPIRKACHYI…IFVALIIITF (287 aa)) is one III repeat. Residues 1101–1117 (IVNLRYFEMCILLVIAA) traverse the membrane as a helical segment. Residues 1118-1141 (SSIALAAEDPVLTNSERNKVLRYF) lie on the Extracellular side of the membrane. A helical membrane pass occupies residues 1142–1161 (DYVFTGVFTFEMVIKMIDQG). The Cytoplasmic portion of the chain corresponds to 1162–1169 (LILQDGSY). Residues 1170–1192 (FRDLWNILDFVVVVGALVAFALA) traverse the membrane as a helical segment. Topologically, residues 1193–1206 (NALGTNKGRDIKTI) are extracellular. Residues 1207–1224 (KSLRVLRVLRPLKTIKRL) traverse the membrane as a helical segment. Over 1225–1243 (PKLKAVFDCVVTSLKNVFN) the chain is Cytoplasmic. Residues 1244 to 1263 (ILIVYKLFMFIFAVIAVQLF) form a helical membrane-spanning segment. Over 1264-1350 (KGKFFYCTDS…RGPSRSNRME (87 aa)) the chain is Extracellular. A helical transmembrane segment spans residues 1351-1374 (MSIFYVVYFVVFPFFFVNIFVALI). Topologically, residues 1375–1431 (IITFQEQGDKMMEECSLEKNERACIDFAISAKPLTRYMPQNRHTFQYRVWHFVVSPS) are cytoplasmic. An IV repeat occupies 1415-1678 (NRHTFQYRVW…LFVAVIMDNF (264 aa)). The chain crosses the membrane as a helical span at residues 1432-1450 (FEYTIMAMIALNTVVLMMK). At 1451 to 1467 (YYSAPWTYELALKYLNI) the chain is on the extracellular side. A helical transmembrane segment spans residues 1468-1485 (AFTMVFSLECVLKVIAFG). Over 1486–1493 (FLNYFRDT) the chain is Cytoplasmic. A helical transmembrane segment spans residues 1494–1512 (WNIFDFITVIGSITEIILT). The Extracellular segment spans residues 1513–1523 (DSKLVNTSGFN). 2 N-linked (GlcNAc...) asparagine glycosylation sites follow: Asn-1518 and Asn-1523. A helical membrane pass occupies residues 1524–1542 (MSFLKLFRAARLIKLLRQG). Topologically, residues 1543 to 1561 (YTIRILLWTFVQSFKALPY) are cytoplasmic. A helical transmembrane segment spans residues 1562–1581 (VCLLIAMLFFIYAIIGMQVF). Over 1582–1650 (GNIKLDEESH…NESERCGTDL (69 aa)) the chain is Extracellular. Asn-1641 carries an N-linked (GlcNAc...) asparagine glycan. Residues 1651-1676 (AYVYFVSFIFFCSFLMLNLFVAVIMD) traverse the membrane as a helical segment. Topologically, residues 1677–2222 (NFEYLTRDSS…LSDTEEDDKC (546 aa)) are cytoplasmic. One can recognise an EF-hand domain in the interval 1691-1726 (HHLDEFVRVWAEYDRAACGRIHYTEMYEMLTLMSPP). Ca(2+)-binding residues include Asp-1704, Arg-1710, and Glu-1715. Residues 1970-2135 (SAHRLNSDSG…QQGQHPSPQH (166 aa)) form a disordered region. Over residues 1974-1994 (LNSDSGHKSDTHRSGGRERGR) the composition is skewed to basic and acidic residues. Phosphoserine is present on residues Ser-2003 and Ser-2022. Over residues 2010 to 2027 (NSEERGTQADWESPERRQ) the composition is skewed to basic and acidic residues. The segment covering 2046-2061 (SLSESSIPSISDTSTP) has biased composition (low complexity). Residues 2104-2123 (LASQALESNSACLTESSNSL) show a composition bias toward polar residues. Over residues 2124-2135 (HPQQGQHPSPQH) the composition is skewed to low complexity.

The protein belongs to the calcium channel alpha-1 subunit (TC 1.A.1.11) family. CACNA1E subfamily. In terms of assembly, interacts with EFHC1. Voltage-dependent calcium channels are multisubunit complexes, consisting of alpha-1, alpha-2, beta and delta subunits in a 1:1:1:1 ratio. The channel activity is directed by the pore-forming and voltage-sensitive alpha-1 subunit. In many cases, this subunit is sufficient to generate voltage-sensitive calcium channel activity. The auxiliary subunits beta and alpha-2/delta linked by a disulfide bridge regulate the channel activity. In terms of tissue distribution, expressed in central nervous system and in insulinoma.

It localises to the membrane. It catalyses the reaction Ca(2+)(in) = Ca(2+)(out). Voltage-sensitive calcium channels (VSCC) mediate the entry of calcium ions into excitable cells and are also involved in a variety of calcium-dependent processes, including muscle contraction, hormone or neurotransmitter release, gene expression, cell motility, cell division and cell death. The isoform alpha-1E gives rise to R-type calcium currents. R-type calcium channels belong to the 'high-voltage activated' (HVA) group and are blocked by nickel. They are however insensitive to dihydropyridines (DHP). Calcium channels containing alpha-1E subunit could be involved in the modulation of firing patterns of neurons which is important for information processing. The sequence is that of Voltage-dependent R-type calcium channel subunit alpha-1E (Cacna1e) from Rattus norvegicus (Rat).